A 71-amino-acid chain; its full sequence is ATP synthase subunit c (71 aa).

Helical transmembrane passes span 5–25 (VLAAGIAVLSGIGAGVGIGIA) and 46–66 (FFILGAALCETTAIYGLVMAF).

This sequence belongs to the ATPase C chain family. As to quaternary structure, F-type ATPases have 2 components, F(1) - the catalytic core - and F(0) - the membrane proton channel. F(1) has five subunits: alpha(3), beta(3), gamma(1), delta(1), epsilon(1). F(0) has three main subunits: a(1), b(2) and c(10-14). The alpha and beta chains form an alternating ring which encloses part of the gamma chain. F(1) is attached to F(0) by a central stalk formed by the gamma and epsilon chains, while a peripheral stalk is formed by the delta and b chains.

The protein localises to the cell membrane. Its function is as follows. F(1)F(0) ATP synthase produces ATP from ADP in the presence of a proton or sodium gradient. F-type ATPases consist of two structural domains, F(1) containing the extramembraneous catalytic core and F(0) containing the membrane proton channel, linked together by a central stalk and a peripheral stalk. During catalysis, ATP synthesis in the catalytic domain of F(1) is coupled via a rotary mechanism of the central stalk subunits to proton translocation. Functionally, key component of the F(0) channel; it plays a direct role in translocation across the membrane. A homomeric c-ring of between 10-14 subunits forms the central stalk rotor element with the F(1) delta and epsilon subunits. This chain is ATP synthase subunit c, found in Clostridium beijerinckii (strain ATCC 51743 / NCIMB 8052) (Clostridium acetobutylicum).